A 259-amino-acid polypeptide reads, in one-letter code: Type III pantothenate kinase (259 aa).

Residue 6–13 (DVGNTNIV) coordinates ATP. Substrate-binding positions include Y100 and 107 to 110 (GADR). D109 (proton acceptor) is an active-site residue. D129 serves as a coordination point for K(+). An ATP-binding site is contributed by T132. T184 lines the substrate pocket.

The protein belongs to the type III pantothenate kinase family. Homodimer. The cofactor is NH4(+). K(+) serves as cofactor.

The protein localises to the cytoplasm. It carries out the reaction (R)-pantothenate + ATP = (R)-4'-phosphopantothenate + ADP + H(+). Its pathway is cofactor biosynthesis; coenzyme A biosynthesis; CoA from (R)-pantothenate: step 1/5. Its function is as follows. Catalyzes the phosphorylation of pantothenate (Pan), the first step in CoA biosynthesis. This Clostridium kluyveri (strain NBRC 12016) protein is Type III pantothenate kinase.